Reading from the N-terminus, the 185-residue chain is Putative 3-methyladenine DNA glycosylase (185 aa).

It belongs to the DNA glycosylase MPG family.

The sequence is that of Putative 3-methyladenine DNA glycosylase from Rhizobium meliloti (strain 1021) (Ensifer meliloti).